A 354-amino-acid chain; its full sequence is Clavesin-1 (354 aa).

The 162-residue stretch at 118-279 (IKRALIDGFP…EFGGTLPPYD (162 aa)) folds into the CRAL-TRIO domain. The interval 317-354 (RECSPKPMKRSQSVVEAGTLKHEEKGENENTQPLLALD) is disordered. The segment covering 335-344 (TLKHEEKGEN) has biased composition (basic and acidic residues). Positions 345-354 (ENTQPLLALD) are enriched in polar residues.

As to quaternary structure, forms a complex with clathrin heavy chain and gamma-adaptin.

Its subcellular location is the golgi apparatus. It localises to the trans-Golgi network membrane. It is found in the early endosome membrane. The protein resides in the cytoplasmic vesicle. The protein localises to the clathrin-coated vesicle. Its function is as follows. Required for normal morphology of late endosomes and/or lysosomes in neurons. Binds phosphatidylinositol 3,5-bisphosphate (PtdIns(3,5)P2). This chain is Clavesin-1 (Clvs1), found in Mus musculus (Mouse).